Consider the following 961-residue polypeptide: MHLNDTMASPLEPLSWSSSPNLIVDTLREDKDYRVNYGDCTTIGHHEIKETPDKCDSLDNANSPVTATVLTSISEDSRDQFENSVLQLRDQDEPENTAPQGSSHSGDGGSYSGNEDIRIHFGHSGSGNSGFLEGLFGCLRPVWNIIGKAYSTDYKLQQQETWEVPFEEISELQWLGSGAQGAVFLGKFRGEEVAIKKVREQKETDIKHLRKLKHPNIIAFKGVCTQAPCYCLIMEYCAHGQLYEVLRAGRKVSPRLLVDWSNGIASGMNYLHLHKIIHRDLKSPNVLVTHTDTVKISDFGTSKELSDKSTKMSFAGTVAWMAPEVIRNEPVSEKVDIWSFGVLLWELLTGEIPYKDVDSSAIIWGVGSNSLHLPVPSTCPDGFKILMKQTWHSKPRNRPSFRQILMHLDIASADVLGTPQETYFKSQAEWREEVKKHFEKIKSEGTCIHRLDEELIRRRREELRHALDIREHYERKLERANNLYMELSAIMLQLEVREKELIRREQAVEKKYPGTYKRHPVRPIVHPNSVEKLIKKKGPPSRIPSQTKRPDLLKSDGIVSAEGSAASASPISGSPKTSSGGGKNRYRSKPRHRRVNSKGSHADFIGVLKHLESPALSQQSSQHQTLASPPVTSCSPYHETSQVMPTFHQTLNVHGQNIANCANNLRYFGPAAALRSPLSSHAQRRMSGSSPDLLSSTLEADSHIQPEREYEYCQQDPYNRCPGCTEAVQQDTDTGNWDSTNVVTAEYRTSGGDPPESPRHNLVQENNEKLESGGEQFSSFKAAIGVSALTVPTPPALPRRIRTLRKNGDESSEEEEGEVDSEVEFPRRHRPPRGMSKCQSYSTFSSENFSVSDGEEGNTSDHSNSPDDVAGGGKVWHGDKLDDLSQTPEIPIEISMQSDGLSDKECAVRRVKTQMSLGKLCTEEHNYENAGNFAESDCDSSEGECSDATVLTNNPVNSSTW.

The segment at 88-118 is disordered; it reads LRDQDEPENTAPQGSSHSGDGGSYSGNEDIR. A Protein kinase domain is found at 169-410; it reads ISELQWLGSG…FRQILMHLDI (242 aa). Residues 175 to 183 and K196 each bind ATP; that span reads LGSGAQGAV. Catalysis depends on D280, which acts as the Proton acceptor. 2 leucine-zipper regions span residues 434–455 and 487–508; these read VKKHFEKIKSEGTCIHRLDEEL and LSAIMLQLEVREKELIRREQAV. A coiled-coil region spans residues 458–497; it reads RRREELRHALDIREHYERKLERANNLYMELSAIMLQLEVR. Disordered stretches follow at residues 513–600, 615–637, and 799–883; these read PGTY…SKGS, ALSQQSSQHQTLASPPVTSCSPY, and RRIR…KLDD. Positions 560–578 are enriched in low complexity; the sequence is SAEGSAASASPISGSPKTS. Over residues 584-596 the composition is skewed to basic residues; sequence NRYRSKPRHRRVN. A compositionally biased stretch (acidic residues) spans 810–823; the sequence is ESSEEEEGEVDSEV. Residues 811 to 824 are acidic; sequence SSEEEEGEVDSEVE. Positions 837-851 are enriched in polar residues; sequence KCQSYSTFSSENFSV.

The protein belongs to the protein kinase superfamily. Ser/Thr protein kinase family.

It localises to the cytoplasm. It is found in the membrane. The catalysed reaction is L-seryl-[protein] + ATP = O-phospho-L-seryl-[protein] + ADP + H(+). It catalyses the reaction L-threonyl-[protein] + ATP = O-phospho-L-threonyl-[protein] + ADP + H(+). May have a role in the JNK signaling pathway. This is Mitogen-activated protein kinase kinase kinase 13-A (map3k13-a) from Xenopus laevis (African clawed frog).